The sequence spans 57 residues: DNA-directed RNA polymerase subunit Rpo6 (57 aa).

Belongs to the archaeal Rpo6/eukaryotic RPB6 RNA polymerase subunit family. In terms of assembly, part of the RNA polymerase complex.

It is found in the cytoplasm. Its subcellular location is the chromosome. The catalysed reaction is RNA(n) + a ribonucleoside 5'-triphosphate = RNA(n+1) + diphosphate. DNA-dependent RNA polymerase (RNAP) catalyzes the transcription of DNA into RNA using the four ribonucleoside triphosphates as substrates. In Thermococcus kodakarensis (strain ATCC BAA-918 / JCM 12380 / KOD1) (Pyrococcus kodakaraensis (strain KOD1)), this protein is DNA-directed RNA polymerase subunit Rpo6.